The following is a 329-amino-acid chain: 2,3,4,5-tetrahydropyridine-2,6-dicarboxylate N-succinyltransferase (329 aa).

Mg(2+) contacts are provided by Asp-177 and Glu-194. The active-site Acyl-anhydride intermediate is Glu-210. Residues Arg-212, Gly-227, Ser-230, Ala-253, 268–269 (EA), Gly-276, Lys-288, and 301–304 (RRNS) contribute to the succinyl-CoA site.

It belongs to the type 2 tetrahydrodipicolinate N-succinyltransferase family. In terms of assembly, homotrimer.

Its subcellular location is the cytoplasm. It carries out the reaction (S)-2,3,4,5-tetrahydrodipicolinate + succinyl-CoA + H2O = (S)-2-succinylamino-6-oxoheptanedioate + CoA. Its pathway is amino-acid biosynthesis; L-lysine biosynthesis via DAP pathway; LL-2,6-diaminopimelate from (S)-tetrahydrodipicolinate (succinylase route): step 1/3. Catalyzes the conversion of the cyclic tetrahydrodipicolinate (THDP) into the acyclic N-succinyl-L-2-amino-6-oxopimelate using succinyl-CoA. This Streptomyces coelicolor (strain ATCC BAA-471 / A3(2) / M145) protein is 2,3,4,5-tetrahydropyridine-2,6-dicarboxylate N-succinyltransferase.